Here is a 98-residue protein sequence, read N- to C-terminus: NADH-ubiquinone oxidoreductase chain 4L (98 aa).

A run of 3 helical transmembrane segments spans residues 1–21, 29–49, and 58–78; these read MPII…GMLF, SLLC…LMAL, and IVPI…LALL.

This sequence belongs to the complex I subunit 4L family. In terms of assembly, core subunit of respiratory chain NADH dehydrogenase (Complex I) which is composed of 45 different subunits.

Its subcellular location is the mitochondrion inner membrane. The catalysed reaction is a ubiquinone + NADH + 5 H(+)(in) = a ubiquinol + NAD(+) + 4 H(+)(out). Functionally, core subunit of the mitochondrial membrane respiratory chain NADH dehydrogenase (Complex I) which catalyzes electron transfer from NADH through the respiratory chain, using ubiquinone as an electron acceptor. Part of the enzyme membrane arm which is embedded in the lipid bilayer and involved in proton translocation. The sequence is that of NADH-ubiquinone oxidoreductase chain 4L (MT-ND4L) from Trachypithecus obscurus (Dusky leaf-monkey).